Consider the following 399-residue polypeptide: Elongation factor Tu (399 aa).

The tr-type G domain maps to 10 to 204 (KPHVNIGTIG…AVDASIPEPE (195 aa)). The interval 19–26 (GHVDHGKT) is G1. Residue 19-26 (GHVDHGKT) coordinates GTP. A Mg(2+)-binding site is contributed by Thr-26. A G2 region spans residues 60-64 (GITIN). Positions 81-84 (DCPG) are G3. GTP is bound by residues 81–85 (DCPGH) and 136–139 (NKCD). Residues 136–139 (NKCD) form a G4 region. Residues 174–176 (SGL) form a G5 region.

This sequence belongs to the TRAFAC class translation factor GTPase superfamily. Classic translation factor GTPase family. EF-Tu/EF-1A subfamily. In terms of assembly, monomer.

It is found in the cytoplasm. The enzyme catalyses GTP + H2O = GDP + phosphate + H(+). Its function is as follows. GTP hydrolase that promotes the GTP-dependent binding of aminoacyl-tRNA to the A-site of ribosomes during protein biosynthesis. The sequence is that of Elongation factor Tu from Prochlorococcus marinus (strain NATL1A).